The following is a 209-amino-acid chain: Probable L-serine dehydratase, alpha chain (209 aa).

The protein belongs to the iron-sulfur dependent L-serine dehydratase family. In terms of assembly, heterodimer of an alpha chain and a beta chain. [4Fe-4S] cluster serves as cofactor.

It carries out the reaction L-serine = pyruvate + NH4(+). It participates in carbohydrate biosynthesis; gluconeogenesis. This chain is Probable L-serine dehydratase, alpha chain (sdhA), found in Latilactobacillus sakei (Lactobacillus sakei).